The chain runs to 154 residues: Endoribonuclease YbeY (154 aa).

The Zn(2+) site is built by histidine 118, histidine 122, and histidine 128.

This sequence belongs to the endoribonuclease YbeY family. Zn(2+) is required as a cofactor.

The protein resides in the cytoplasm. In terms of biological role, single strand-specific metallo-endoribonuclease involved in late-stage 70S ribosome quality control and in maturation of the 3' terminus of the 16S rRNA. The chain is Endoribonuclease YbeY from Macrococcus caseolyticus (strain JCSC5402) (Macrococcoides caseolyticum).